Here is a 219-residue protein sequence, read N- to C-terminus: MSNNPADDEGYNEYLYKILVVGDIGTGKTSIIKRFVHNIFSMHYKSTIGVDFALKVINWDPKTEVRLQLWDIAGQERFGSMTRVYYKEAVGAMITFDVTRMSTFEAVAKWKADIDSKVTYGADEKPIPVVLLANKCDLGKDAFIKTANDMDKYCKDNGFIGWFETSAKENMNIEKAARFLVDHILKNDVRRNQPIEGTIQPGDLNKQPQPTSTGPSCCK.

A GTP-binding site is contributed by G22–T29. The short motif at Y44 to F52 is the Effector region element. Residues D71–Q75 and N134–D137 each bind GTP. A disordered region spans residues N192–K219. The segment covering K206–K219 has biased composition (polar residues). S-geranylgeranyl cysteine attachment occurs at residues C217 and C218.

It belongs to the small GTPase superfamily. Rab family.

This is Ras-related protein Rab-32A (rab32A) from Dictyostelium discoideum (Social amoeba).